The sequence spans 251 residues: 5-oxoprolinase subunit A 2 (251 aa).

This sequence belongs to the LamB/PxpA family. As to quaternary structure, forms a complex composed of PxpA, PxpB and PxpC.

It catalyses the reaction 5-oxo-L-proline + ATP + 2 H2O = L-glutamate + ADP + phosphate + H(+). Catalyzes the cleavage of 5-oxoproline to form L-glutamate coupled to the hydrolysis of ATP to ADP and inorganic phosphate. In Pseudomonas syringae pv. tomato (strain ATCC BAA-871 / DC3000), this protein is 5-oxoprolinase subunit A 2.